The primary structure comprises 208 residues: MEVICKHYTPLDIASQAIRTCWQSFEYSDDGGCKDKELIHRVGNIFRHSSTLEHLYYNFEIKGLSRGALQELSRHRIASLSVKSSRYTLRELKEVESFLPLNETNLERAKEFLVFVDNEKVNAMSVLALENLRILLSEHNIKNDLAKYAMPESYKTHLAYSINARSLQNFLTLRSSNKALKEMQDLAKALFDALPGEHQYLFEDCLKH.

A ThyX domain is found at 1–208; it reads MEVICKHYTP…QYLFEDCLKH (208 aa). FAD is bound by residues S50 and 74 to 76; that span reads RHR. DUMP-binding positions include 71-74, 84-86, and K147; these read ELSR and SSR. The ThyX motif motif lies at 74 to 84; sequence RHRIASLSVKS. FAD-binding positions include 163-165 and N169; that span reads NAR. R174 serves as a coordination point for dUMP. R174 serves as the catalytic Involved in ionization of N3 of dUMP, leading to its activation.

It belongs to the thymidylate synthase ThyX family. In terms of assembly, homotetramer. Requires FAD as cofactor.

The enzyme catalyses dUMP + (6R)-5,10-methylene-5,6,7,8-tetrahydrofolate + NADPH + H(+) = dTMP + (6S)-5,6,7,8-tetrahydrofolate + NADP(+). It participates in pyrimidine metabolism; dTTP biosynthesis. Functionally, catalyzes the reductive methylation of 2'-deoxyuridine-5'-monophosphate (dUMP) to 2'-deoxythymidine-5'-monophosphate (dTMP) while utilizing 5,10-methylenetetrahydrofolate (mTHF) as the methyl donor, and NAD(P)H and FADH(2) as the reductant. The sequence is that of Flavin-dependent thymidylate synthase from Helicobacter pylori (strain ATCC 700392 / 26695) (Campylobacter pylori).